The following is a 380-amino-acid chain: cAMP-dependent protein kinase type I-alpha regulatory subunit (380 aa).

Methionine 1 is modified (N-acetylmethionine). N-acetylalanine; in cAMP-dependent protein kinase type I-alpha regulatory subunit, N-terminally processed is present on alanine 2. Residues alanine 2–valine 135 form a dimerization and phosphorylation region. Residues serine 3, serine 76, and serine 82 each carry the phosphoserine modification. The disordered stretch occupies residues isoleucine 64–arginine 96. Residues arginine 95–isoleucine 99 carry the Pseudophosphorylation motif motif. Residue serine 100 is modified to Phosphoserine. 3',5'-cyclic AMP is bound by residues leucine 136 to serine 253, glutamate 201, arginine 210, isoleucine 254 to valine 380, glutamate 325, and arginine 334. The residue at position 257 (serine 257) is a Phosphoserine.

The protein belongs to the cAMP-dependent kinase regulatory chain family. The inactive holoenzyme is composed of two regulatory chains and two catalytic chains. Activation by cAMP releases the two active catalytic monomers and the regulatory dimer. Interacts with PRKACA and PRKACB. PRKAR1A also interacts with RFC2; the complex may be involved in cell survival. Interacts with AKAP4. Interacts with RARA; the interaction occurs in the presence of cAMP or FSH and regulates RARA transcriptional activity. Interacts with the phosphorylated form of PJA2. Interacts with CBFA2T3. Interacts with PRKX; regulates this cAMP-dependent protein kinase. Interacts with smAKAP; this interaction may target PRKAR1A to the plasma membrane. Interacts with AICDA. In terms of processing, the pseudophosphorylation site binds to the substrate-binding region of the catalytic chain, resulting in the inhibition of its activity. Four types of regulatory chains are found: I-alpha, I-beta, II-alpha, and II-beta. Their expression varies among tissues and is in some cases constitutive and in others inducible.

The protein localises to the cell membrane. Its function is as follows. Regulatory subunit of the cAMP-dependent protein kinases involved in cAMP signaling in cells. This chain is cAMP-dependent protein kinase type I-alpha regulatory subunit (PRKAR1A), found in Sus scrofa (Pig).